We begin with the raw amino-acid sequence, 677 residues long: Testis-specific Y-encoded-like protein 2 (677 aa).

Residues 1–54 (MDRPDEGPPAKTPRLSSSEPRQRDLPPPPPPPLQRLPLPPPQQRPRPQEETEAA) form a disordered region. Lys-11 is covalently cross-linked (Glycyl lysine isopeptide (Lys-Gly) (interchain with G-Cter in SUMO2)). The residue at position 18 (Ser-18) is a Phosphoserine. Positions 25–44 (LPPPPPPPLQRLPLPPPQQR) are enriched in pro residues. Glycyl lysine isopeptide (Lys-Gly) (interchain with G-Cter in SUMO2) cross-links involve residues Lys-158 and Lys-160. A disordered region spans residues 175–202 (KESVRRRQRRRRRRRKQRKAKESRERSA). A compositionally biased stretch (basic residues) spans 178–193 (VRRRQRRRRRRRKQRK). Thr-333 carries the post-translational modification Phosphothreonine. Residues 469 to 658 (ANENLCDSEN…EVNSEDSDIQ (190 aa)) form a disordered region. Over residues 484–493 (GYNTKITDNK) the composition is skewed to polar residues. Residues 509-525 (EKNTYDSEDSNSEKADG) show a composition bias toward basic and acidic residues. Positions 526–540 (DNTTLRDNQQVTNIQ) are enriched in polar residues. 2 stretches are compositionally biased toward acidic residues: residues 543-581 (SDSDNGDEGSDDEDDDGNEGDNEGSDDDDDDNEGSDDDD) and 606-627 (DYEEEVELISEDSVEEEEETSE). The span at 639-650 (DERIYGEERSEV) shows a compositional bias: basic and acidic residues. 3 positions are modified to phosphoserine: Ser-648, Ser-652, and Ser-655.

The protein belongs to the nucleosome assembly protein (NAP) family. In terms of assembly, interacts with histones. Interacts with CASK. Part of a complex containing CASK, TBR1 and TSPYL2. Phosphorylation at Thr-333 impairs function on cell proliferation. In terms of tissue distribution, present at high levels in the pituitary gland and at moderate levels in adrenal gland, brain, testis and ovary. In brain, expressed both in mature neurons and progenitor cells (at protein level).

It is found in the nucleus. The protein resides in the cytoplasm. Part of the CASK/TBR1/TSPYL2 transcriptional complex which modulates gene expression in response to neuronal synaptic activity, probably by facilitating nucleosome assembly. May inhibit cell proliferation by inducing p53-dependent CDKN1A expression. The chain is Testis-specific Y-encoded-like protein 2 (Tspyl2) from Mus musculus (Mouse).